Here is a 621-residue protein sequence, read N- to C-terminus: Chaperone protein HscA homolog (621 aa).

It belongs to the heat shock protein 70 family.

Chaperone involved in the maturation of iron-sulfur cluster-containing proteins. Has a low intrinsic ATPase activity which is markedly stimulated by HscB. The protein is Chaperone protein HscA homolog of Cupriavidus metallidurans (strain ATCC 43123 / DSM 2839 / NBRC 102507 / CH34) (Ralstonia metallidurans).